Here is a 481-residue protein sequence, read N- to C-terminus: Adenosylhomocysteinase (481 aa).

3 residues coordinate substrate: threonine 65, aspartate 140, and glutamate 200. 201 to 203 is a binding site for NAD(+); sequence TTT. The substrate site is built by lysine 230 and aspartate 234. NAD(+)-binding positions include asparagine 235, 264-269, glutamate 287, asparagine 322, 343-345, and asparagine 393; these read GYGDVG and IGH.

This sequence belongs to the adenosylhomocysteinase family. The cofactor is NAD(+).

The protein resides in the cytoplasm. It carries out the reaction S-adenosyl-L-homocysteine + H2O = L-homocysteine + adenosine. The protein operates within amino-acid biosynthesis; L-homocysteine biosynthesis; L-homocysteine from S-adenosyl-L-homocysteine: step 1/1. May play a key role in the regulation of the intracellular concentration of adenosylhomocysteine. The sequence is that of Adenosylhomocysteinase from Polynucleobacter asymbioticus (strain DSM 18221 / CIP 109841 / QLW-P1DMWA-1) (Polynucleobacter necessarius subsp. asymbioticus).